Consider the following 96-residue polypeptide: Bublin coiled-coil protein (96 aa).

A coiled-coil region spans residues 39–79; the sequence is NSCLDDIEDRNDALNGKLHELLESNRQARKDFRQQLNDEEA. The interval 63 to 96 is disordered; the sequence is NRQARKDFRQQLNDEEASPPPAEDPASRDTQTED. A compositionally biased stretch (basic and acidic residues) spans 87 to 96; it reads PASRDTQTED.

This sequence belongs to the UPF0184 (EST00098) family.

The protein resides in the cell junction. Its subcellular location is the cytoplasm. The protein localises to the cytoskeleton. Essential for intermediate filament organization in intestinal cells, interacts with intermediate filament and regulates intestinal lumen morphology. In Ctenopharyngodon idella (Grass carp), this protein is Bublin coiled-coil protein (bbln).